Reading from the N-terminus, the 111-residue chain is Resistin-like alpha (111 aa).

The signal sequence occupies residues 1–23 (MKTTTCSLLICISLLQLMVPVNT). 5 disulfide bridges follow: cysteine 55/cysteine 108, cysteine 67/cysteine 107, cysteine 76/cysteine 93, cysteine 78/cysteine 95, and cysteine 82/cysteine 97.

It belongs to the resistin/FIZZ family. As to quaternary structure, monomer. As to expression, highest levels in adipose tissue.

The protein resides in the secreted. In terms of biological role, probable hormone. Plays a role in pulmonary vascular remodeling. The polypeptide is Resistin-like alpha (Retnla) (Mus musculus (Mouse)).